A 672-amino-acid chain; its full sequence is tRNA 5-methylaminomethyl-2-thiouridine biosynthesis bifunctional protein MnmC (672 aa).

The segment at 1–235 is tRNA (mnm(5)s(2)U34)-methyltransferase; the sequence is MTRVLEPAEP…KRDMTVARFA (235 aa). Positions 259–672 are FAD-dependent cmnm(5)s(2)U34 oxidoreductase; it reads IGAGLAGCAV…SAGPGVDAAG (414 aa).

The protein in the N-terminal section; belongs to the methyltransferase superfamily. tRNA (mnm(5)s(2)U34)-methyltransferase family. In the C-terminal section; belongs to the DAO family. It depends on FAD as a cofactor.

It localises to the cytoplasm. It catalyses the reaction 5-aminomethyl-2-thiouridine(34) in tRNA + S-adenosyl-L-methionine = 5-methylaminomethyl-2-thiouridine(34) in tRNA + S-adenosyl-L-homocysteine + H(+). Functionally, catalyzes the last two steps in the biosynthesis of 5-methylaminomethyl-2-thiouridine (mnm(5)s(2)U) at the wobble position (U34) in tRNA. Catalyzes the FAD-dependent demodification of cmnm(5)s(2)U34 to nm(5)s(2)U34, followed by the transfer of a methyl group from S-adenosyl-L-methionine to nm(5)s(2)U34, to form mnm(5)s(2)U34. The chain is tRNA 5-methylaminomethyl-2-thiouridine biosynthesis bifunctional protein MnmC from Cupriavidus metallidurans (strain ATCC 43123 / DSM 2839 / NBRC 102507 / CH34) (Ralstonia metallidurans).